Here is a 163-residue protein sequence, read N- to C-terminus: Adenosine 5'-monophosphoramidase HINT2 (163 aa).

Residues 1-17 (MAAAVVLAAGLCVARRA) constitute a mitochondrion transit peptide. In terms of domain architecture, HIT spans 55-163 (IFSRILDRSL…GGRQLQWPPG (109 aa)). Residues Ser63 and Asp80 each contribute to the AMP site. Lys119 bears the N6-acetyllysine mark. An AMP-binding site is contributed by Asn136. Lys139 is subject to N6-acetyllysine. Residues 142 to 145 (AQSV) and 149 to 151 (HIH) contribute to the AMP site. The Histidine triad motif motif lies at 147-151 (HLHIH). Residue His149 is the Tele-AMP-histidine intermediate of the active site.

It belongs to the HINT family.

The protein localises to the mitochondrion. It carries out the reaction adenosine 5'-phosphoramidate + H2O = AMP + NH4(+). Functionally, exhibits adenosine 5'-monophosphoramidase activity, hydrolyzing purine nucleotide phosphoramidates with a single phosphate group such as adenosine 5'monophosphoramidate (AMP-NH2) to yield AMP and NH2. Hydrolyzes adenosine 5'-O-p-nitrophenylphosphoramidate (AMP-pNA). May be involved in steroid biosynthesis. May play a role in apoptosis. The sequence is that of Adenosine 5'-monophosphoramidase HINT2 from Bos taurus (Bovine).